The sequence spans 538 residues: Guanine nucleotide-binding protein-like 3 (538 aa).

A compositionally biased stretch (basic residues) spans 1–45; that stretch reads MKRPKLKKASKRMTCHKRYKIQKKVREHHRKLRKEAKKRGHKKPR. Disordered stretches follow at residues 1 to 57 and 69 to 126; these read MKRP…APFK and QQLE…NPKK. Residues 2–46 form a basic region; that stretch reads KRPKLKKASKRMTCHKRYKIQKKVREHHRKLRKEAKKRGHKKPRK. A coiled-coil region spans residues 54–95; it reads APFKEALLREAELRKQQLEELKQQQKLDRQKEQERKRKLEVS. A compositionally biased stretch (basic and acidic residues) spans 69–93; the sequence is QQLEELKQQQKLDRQKEQERKRKLE. N6-acetyllysine is present on lysine 79. A Glycyl lysine isopeptide (Lys-Gly) (interchain with G-Cter in SUMO2) cross-link involves residue lysine 91. Phosphoserine is present on residues serine 95 and serine 101. A compositionally biased stretch (basic residues) spans 114 to 126; that stretch reads RKKAKAGKQNPKK. The region spanning 129–307 is the CP-type G domain; sequence CQELKKVIEA…IIDSPCLIIS (179 aa). 176–179 is a GTP binding site; sequence NKSD. Glycyl lysine isopeptide (Lys-Gly) (interchain with G-Cter in SUMO2) cross-links involve residues lysine 177, lysine 248, lysine 262, and lysine 270. GTP is bound at residue 256–263; sequence GFPNVGKS. The interval 277-451 is intermediate; the sequence is VGISMGLTRS…HLTNRILFRS (175 aa). Position 300–303 (300–303) interacts with GTP; it reads DSPC. Residues 460–475 are compositionally biased toward basic and acidic residues; the sequence is DEKDIVEESPRQTEDK. Residues 460–532 form an acidic region; the sequence is DEKDIVEESP…RASQEDETYD (73 aa). Residues 460-538 are disordered; the sequence is DEKDIVEESP…ETYDFTTDYI (79 aa). Residues serine 493, serine 505, and serine 518 each carry the phosphoserine modification. A compositionally biased stretch (polar residues) spans 506–518; sequence PEQSTAGKPSDGS.

The protein belongs to the TRAFAC class YlqF/YawG GTPase family. In terms of assembly, interacts with MDM2; this interaction stabilizes MDM2. Interaction with MDM2 occurs in the nucleoplasm and is triggered by a nucleolar release mechanism, such as mitosis-induced nucleolar disassembly. Indirectly interacts with TP53, via MDM2-binding. Interacts with TSC22D1 isoform 2. Expressed in the adult bone marrow population that is enriched in hematopoietic stem cells.

The protein localises to the nucleus. It localises to the nucleolus. Functionally, may be required to maintain the proliferative capacity of stem cells. Stabilizes MDM2 by preventing its ubiquitination, and hence proteasomal degradation. The polypeptide is Guanine nucleotide-binding protein-like 3 (Gnl3) (Mus musculus (Mouse)).